Here is a 561-residue protein sequence, read N- to C-terminus: Arginine--tRNA ligase (561 aa).

Positions 129–139 (ANPTGPLHVGH) match the 'HIGH' region motif.

This sequence belongs to the class-I aminoacyl-tRNA synthetase family. In terms of assembly, monomer.

The protein localises to the cytoplasm. The enzyme catalyses tRNA(Arg) + L-arginine + ATP = L-arginyl-tRNA(Arg) + AMP + diphosphate. This chain is Arginine--tRNA ligase, found in Bordetella petrii (strain ATCC BAA-461 / DSM 12804 / CCUG 43448).